The sequence spans 205 residues: Meiotic nuclear division protein 1 homolog (205 aa).

Serine 2 bears the N-acetylserine mark. Residues 84–173 (HKLEVLESQL…EAANRWTDNI (90 aa)) adopt a coiled-coil conformation.

This sequence belongs to the MND1 family. In terms of assembly, heterodimer with PSMC3IP/HOP2. MND1-PSMC3IP interacts with DMC1 and RAD51 and binds preferentially to dsDNA.

The protein localises to the nucleus. Its function is as follows. Required for proper homologous chromosome pairing and efficient cross-over and intragenic recombination during meiosis. Stimulates both DMC1- and RAD51-mediated homologous strand assimilation, which is required for the resolution of meiotic double-strand breaks. The protein is Meiotic nuclear division protein 1 homolog of Homo sapiens (Human).